The following is a 190-amino-acid chain: Ladderlectin (190 aa).

The first 18 residues, 1–18 (MAMLTISLLLCAAVALNG), serve as a signal peptide directing secretion. Residues 60-179 (GSRCFMFVET…GNSFPSGVLQ (120 aa)) enclose the C-type lectin domain. A disulfide bond links Cys-153 and Cys-169.

In terms of assembly, multimeric. In terms of tissue distribution, expressed in cells of the branchial epithelium, hepatic sinusoids, biliary epithelium, renal interstitium, skin, and sub-mucosal granular layer of the intestine. Highly expressed in caudal kidney. Moderately expressed in liver. Weakly expressed in gill, spleen, cranial kidney and skin. Isoform 1 is highly expressed in intestine. Isoform 2 is weakly expressed in intestine.

In terms of biological role, lectin that binds sepharose in a calcium-dependent manner. The polypeptide is Ladderlectin (Oncorhynchus mykiss (Rainbow trout)).